The primary structure comprises 617 residues: Dihydroxy-acid dehydratase (617 aa).

Residue Asp82 participates in Mg(2+) binding. [2Fe-2S] cluster is bound at residue Cys123. Residues Asp124 and Lys125 each contribute to the Mg(2+) site. The residue at position 125 (Lys125) is an N6-carboxylysine. Residue Cys197 participates in [2Fe-2S] cluster binding. Glu497 is a binding site for Mg(2+). The active-site Proton acceptor is Ser523.

Belongs to the IlvD/Edd family. As to quaternary structure, homodimer. [2Fe-2S] cluster is required as a cofactor. Mg(2+) serves as cofactor.

The catalysed reaction is (2R)-2,3-dihydroxy-3-methylbutanoate = 3-methyl-2-oxobutanoate + H2O. It catalyses the reaction (2R,3R)-2,3-dihydroxy-3-methylpentanoate = (S)-3-methyl-2-oxopentanoate + H2O. It participates in amino-acid biosynthesis; L-isoleucine biosynthesis; L-isoleucine from 2-oxobutanoate: step 3/4. The protein operates within amino-acid biosynthesis; L-valine biosynthesis; L-valine from pyruvate: step 3/4. In terms of biological role, functions in the biosynthesis of branched-chain amino acids. Catalyzes the dehydration of (2R,3R)-2,3-dihydroxy-3-methylpentanoate (2,3-dihydroxy-3-methylvalerate) into 2-oxo-3-methylpentanoate (2-oxo-3-methylvalerate) and of (2R)-2,3-dihydroxy-3-methylbutanoate (2,3-dihydroxyisovalerate) into 2-oxo-3-methylbutanoate (2-oxoisovalerate), the penultimate precursor to L-isoleucine and L-valine, respectively. The protein is Dihydroxy-acid dehydratase of Streptomyces coelicolor (strain ATCC BAA-471 / A3(2) / M145).